The following is a 64-amino-acid chain: Large ribosomal subunit protein bL35 (64 aa).

The segment at 1–55 is disordered; that stretch reads MPKMKSNKSVAARFKLTGSGQLKRTRPGKRHKLSKRSSQQKRNLSKQPLVDQGQV. Basic residues predominate over residues 23–39; the sequence is KRTRPGKRHKLSKRSSQ.

Belongs to the bacterial ribosomal protein bL35 family.

In Chlamydia muridarum (strain MoPn / Nigg), this protein is Large ribosomal subunit protein bL35.